We begin with the raw amino-acid sequence, 479 residues long: PTS system sucrose-specific EIIBC component (479 aa).

The PTS EIIB type-1 domain occupies 4-87 (PAVAKELLTL…AKLTGMSEMS (84 aa)). Residue Cys-26 is the Phosphocysteine intermediate; for EIIB activity of the active site. 11 helical membrane-spanning segments follow: residues 112–132 (IFVP…IYNL), 158–178 (MINT…AFSA), 182–202 (FGGN…PDLL), 204–224 (GWGF…ILGF), 232–252 (QGSV…ELGL), 264–284 (LTPL…VGPF), 303–323 (AGFV…ITGM), 345–365 (FIFP…LAVG), 376–396 (IAIP…MFGV), 403–423 (PFIA…MFNV), and 448–468 (IAGM…LGIG). Residues 120 to 477 (IVAGGLLMGI…GDRAKVGKKA (358 aa)) enclose the PTS EIIC type-1 domain.

It localises to the cell inner membrane. The catalysed reaction is N(pros)-phospho-L-histidyl-[protein](out) + sucrose = sucrose 6(G)-phosphate(in) + L-histidyl-[protein]. The phosphoenolpyruvate-dependent sugar phosphotransferase system (sugar PTS), a major carbohydrate active transport system, catalyzes the phosphorylation of incoming sugar substrates concomitantly with their translocation across the cell membrane. This system is involved in sucrose transport. The sequence is that of PTS system sucrose-specific EIIBC component from Vibrio alginolyticus.